Consider the following 258-residue polypeptide: Phosphoadenosine 5'-phosphosulfate reductase (258 aa).

The active-site Nucleophile; cysteine thiosulfonate intermediate is the Cys244.

This sequence belongs to the PAPS reductase family. CysH subfamily.

It localises to the cytoplasm. The enzyme catalyses [thioredoxin]-disulfide + sulfite + adenosine 3',5'-bisphosphate + 2 H(+) = [thioredoxin]-dithiol + 3'-phosphoadenylyl sulfate. Its pathway is sulfur metabolism; hydrogen sulfide biosynthesis; sulfite from sulfate: step 3/3. In terms of biological role, catalyzes the formation of sulfite from phosphoadenosine 5'-phosphosulfate (PAPS) using thioredoxin as an electron donor. The protein is Phosphoadenosine 5'-phosphosulfate reductase of Vibrio atlanticus (strain LGP32) (Vibrio splendidus (strain Mel32)).